A 248-amino-acid chain; its full sequence is Anamorsin homolog (248 aa).

The N-terminal SAM-like domain stretch occupies residues 4-130 (FKGLQKSLYI…ETGSSARLSF (127 aa)). The segment at 131-161 (AKKTSSVNVWKISGDDEELIDEEELLDEEDK) is linker. [2Fe-2S] cluster is bound by residues Cys-172, Cys-181, Cys-184, and Cys-186. A fe-S binding site A region spans residues 172 to 186 (CSTTGKRKACKNCSC). 4 residues coordinate [4Fe-4S] cluster: Cys-209, Cys-212, Cys-220, and Cys-223. 2 consecutive short sequence motifs (cx2C motif) follow at residues 209-212 (CGNC) and 220-223 (CSTC). The fe-S binding site B stretch occupies residues 209–223 (CGNCYLGDAFRCSTC).

The protein belongs to the anamorsin family. As to quaternary structure, monomer. Requires [2Fe-2S] cluster as cofactor. [4Fe-4S] cluster serves as cofactor.

It is found in the cytoplasm. The protein localises to the mitochondrion intermembrane space. Functionally, component of the cytosolic iron-sulfur (Fe-S) protein assembly (CIA) machinery. Required for the maturation of extramitochondrial Fe-S proteins. Part of an electron transfer chain functioning in an early step of cytosolic Fe-S biogenesis, facilitating the de novo assembly of a [4Fe-4S] cluster on the cytosolic Fe-S scaffold complex. Electrons are transferred from NADPH via a FAD- and FMN-containing diflavin oxidoreductase. Together with the diflavin oxidoreductase, also required for the assembly of the diferric tyrosyl radical cofactor of ribonucleotide reductase (RNR), probably by providing electrons for reduction during radical cofactor maturation in the catalytic small subunit. This Drosophila virilis (Fruit fly) protein is Anamorsin homolog.